A 181-amino-acid chain; its full sequence is Translation initiation factor IF-3 (181 aa).

The protein belongs to the IF-3 family. As to quaternary structure, monomer.

The protein localises to the cytoplasm. Its function is as follows. IF-3 binds to the 30S ribosomal subunit and shifts the equilibrium between 70S ribosomes and their 50S and 30S subunits in favor of the free subunits, thus enhancing the availability of 30S subunits on which protein synthesis initiation begins. The protein is Translation initiation factor IF-3 of Mycoplasma mycoides subsp. mycoides SC (strain CCUG 32753 / NCTC 10114 / PG1).